The sequence spans 116 residues: Ribosome-binding factor A (116 aa).

The protein belongs to the RbfA family. In terms of assembly, monomer. Binds 30S ribosomal subunits, but not 50S ribosomal subunits or 70S ribosomes.

It localises to the cytoplasm. In terms of biological role, one of several proteins that assist in the late maturation steps of the functional core of the 30S ribosomal subunit. Associates with free 30S ribosomal subunits (but not with 30S subunits that are part of 70S ribosomes or polysomes). Required for efficient processing of 16S rRNA. May interact with the 5'-terminal helix region of 16S rRNA. In Staphylococcus aureus (strain JH9), this protein is Ribosome-binding factor A.